Consider the following 260-residue polypeptide: MLKFYDREFSSRLLIGTALYPSPKIMQDAIRAAGSQIVTVSLRRETAGGRTGDAFWSLIRELDVTVLPNTAGCKSVREAVTTAKLARELFGTSWIKLEVIADNDTLQPDVIGLVEAAAVLIKDGFKVFPYCTEDLGVAMRLVEVGCKVVMPWAAPIGSAKGIVNRDALRLLRERLPDITLVVDAGIGAPSHAAQACELGYDAVLLNTAVAKAADPVAMAGAFSLAVEAGRTAFEAGLMEARDFASPSTPVVGTPFWHAVS.

The Schiff-base intermediate with DXP role is filled by K96. Residues G157, 184-185 (AG), and 206-207 (NT) contribute to the 1-deoxy-D-xylulose 5-phosphate site.

It belongs to the ThiG family. As to quaternary structure, homotetramer. Forms heterodimers with either ThiH or ThiS.

Its subcellular location is the cytoplasm. The enzyme catalyses [ThiS sulfur-carrier protein]-C-terminal-Gly-aminoethanethioate + 2-iminoacetate + 1-deoxy-D-xylulose 5-phosphate = [ThiS sulfur-carrier protein]-C-terminal Gly-Gly + 2-[(2R,5Z)-2-carboxy-4-methylthiazol-5(2H)-ylidene]ethyl phosphate + 2 H2O + H(+). It participates in cofactor biosynthesis; thiamine diphosphate biosynthesis. Its function is as follows. Catalyzes the rearrangement of 1-deoxy-D-xylulose 5-phosphate (DXP) to produce the thiazole phosphate moiety of thiamine. Sulfur is provided by the thiocarboxylate moiety of the carrier protein ThiS. In vitro, sulfur can be provided by H(2)S. This Nitrobacter hamburgensis (strain DSM 10229 / NCIMB 13809 / X14) protein is Thiazole synthase.